Consider the following 207-residue polypeptide: ATP phosphoribosyltransferase (207 aa).

This sequence belongs to the ATP phosphoribosyltransferase family. Short subfamily. Heteromultimer composed of HisG and HisZ subunits.

The protein resides in the cytoplasm. It carries out the reaction 1-(5-phospho-beta-D-ribosyl)-ATP + diphosphate = 5-phospho-alpha-D-ribose 1-diphosphate + ATP. The protein operates within amino-acid biosynthesis; L-histidine biosynthesis; L-histidine from 5-phospho-alpha-D-ribose 1-diphosphate: step 1/9. Functionally, catalyzes the condensation of ATP and 5-phosphoribose 1-diphosphate to form N'-(5'-phosphoribosyl)-ATP (PR-ATP). Has a crucial role in the pathway because the rate of histidine biosynthesis seems to be controlled primarily by regulation of HisG enzymatic activity. This is ATP phosphoribosyltransferase from Geobacillus kaustophilus (strain HTA426).